The following is a 284-amino-acid chain: RNase adapter protein RapZ (284 aa).

ATP is bound at residue G8–S15. A GTP-binding site is contributed by D56–N59. Positions R266–P284 are RNA-binding.

Belongs to the RapZ-like family. RapZ subfamily. In terms of assembly, homotrimer.

Its function is as follows. Modulates the synthesis of GlmS, by affecting the processing and stability of the regulatory small RNA GlmZ. When glucosamine-6-phosphate (GlcN6P) concentrations are high in the cell, RapZ binds GlmZ and targets it to cleavage by RNase E. Consequently, GlmZ is inactivated and unable to activate GlmS synthesis. Under low GlcN6P concentrations, RapZ is sequestered and inactivated by an other regulatory small RNA, GlmY, preventing GlmZ degradation and leading to synthesis of GlmS. The chain is RNase adapter protein RapZ from Shigella dysenteriae serotype 1 (strain Sd197).